A 589-amino-acid chain; its full sequence is Aspartate--tRNA ligase (589 aa).

Glutamate 175 is a binding site for L-aspartate. Residues 199–202 form an aspartate region; sequence QIFK. L-aspartate is bound at residue arginine 221. ATP is bound by residues 221 to 223 and glutamine 230; that span reads RDE. An L-aspartate-binding site is contributed by histidine 449. Residue glutamate 483 participates in ATP binding. Arginine 490 lines the L-aspartate pocket. ATP is bound at residue 535-538; that stretch reads GLDR.

The protein belongs to the class-II aminoacyl-tRNA synthetase family. Type 1 subfamily. Homodimer.

The protein localises to the cytoplasm. It catalyses the reaction tRNA(Asp) + L-aspartate + ATP = L-aspartyl-tRNA(Asp) + AMP + diphosphate. In terms of biological role, catalyzes the attachment of L-aspartate to tRNA(Asp) in a two-step reaction: L-aspartate is first activated by ATP to form Asp-AMP and then transferred to the acceptor end of tRNA(Asp). The sequence is that of Aspartate--tRNA ligase from Shouchella clausii (strain KSM-K16) (Alkalihalobacillus clausii).